The following is a 1181-amino-acid chain: Putative type II restriction enzyme and methyltransferase RM.MjaORFECS2P (1181 aa).

In the C-terminal section; belongs to the N(4)/N(6)-methyltransferase family.

The catalysed reaction is Endonucleolytic cleavage of DNA to give specific double-stranded fragments with terminal 5'-phosphates.. It catalyses the reaction a 2'-deoxyadenosine in DNA + S-adenosyl-L-methionine = an N(6)-methyl-2'-deoxyadenosine in DNA + S-adenosyl-L-homocysteine + H(+). Probably a G subtype restriction enzyme that recognizes an undetermined sequence and cleaves at an undetermined site. Probably also acts as an alpha subtype methylase, presumably on the same sequence. The polypeptide is Putative type II restriction enzyme and methyltransferase RM.MjaORFECS2P (Methanocaldococcus jannaschii (strain ATCC 43067 / DSM 2661 / JAL-1 / JCM 10045 / NBRC 100440) (Methanococcus jannaschii)).